The primary structure comprises 729 residues: Fatty acid oxidation complex subunit alpha (729 aa).

Positions 1–189 are enoyl-CoA hydratase/isomerase; it reads MLYKGDTLYL…KIGLVDGVVK (189 aa). Asp-296 contacts substrate. Positions 311 to 729 are 3-hydroxyacyl-CoA dehydrogenase; the sequence is ETPKQAAVLG…ARPVGSLKTA (419 aa). NAD(+) is bound by residues Met-324, Asp-343, 400–402, Lys-407, and Ser-429; that span reads VVE. Residue His-450 is the For 3-hydroxyacyl-CoA dehydrogenase activity of the active site. NAD(+) is bound at residue Asn-453. Substrate contacts are provided by Asn-500 and Tyr-660. The segment at 708–729 is disordered; sequence RHNEPYYPPVEPARPVGSLKTA.

In the N-terminal section; belongs to the enoyl-CoA hydratase/isomerase family. It in the C-terminal section; belongs to the 3-hydroxyacyl-CoA dehydrogenase family. Heterotetramer of two alpha chains (FadB) and two beta chains (FadA).

The enzyme catalyses a (3S)-3-hydroxyacyl-CoA + NAD(+) = a 3-oxoacyl-CoA + NADH + H(+). It catalyses the reaction a (3S)-3-hydroxyacyl-CoA = a (2E)-enoyl-CoA + H2O. The catalysed reaction is a 4-saturated-(3S)-3-hydroxyacyl-CoA = a (3E)-enoyl-CoA + H2O. It carries out the reaction (3S)-3-hydroxybutanoyl-CoA = (3R)-3-hydroxybutanoyl-CoA. The enzyme catalyses a (3Z)-enoyl-CoA = a 4-saturated (2E)-enoyl-CoA. It catalyses the reaction a (3E)-enoyl-CoA = a 4-saturated (2E)-enoyl-CoA. The protein operates within lipid metabolism; fatty acid beta-oxidation. Involved in the aerobic and anaerobic degradation of long-chain fatty acids via beta-oxidation cycle. Catalyzes the formation of 3-oxoacyl-CoA from enoyl-CoA via L-3-hydroxyacyl-CoA. It can also use D-3-hydroxyacyl-CoA and cis-3-enoyl-CoA as substrate. This is Fatty acid oxidation complex subunit alpha from Salmonella schwarzengrund (strain CVM19633).